The primary structure comprises 162 residues: Interleukin-15 (162 aa).

An N-terminal signal peptide occupies residues 1 to 29; the sequence is MRILKPHLRSTSIQCYLCLLLNSHFLTEA. Positions 30–48 are excised as a propeptide; it reads GIHVFILGCISAGLPKTEA. 2 disulfides stabilise this stretch: Cys-83-Cys-133 and Cys-90-Cys-136. Residue Asn-108 is glycosylated (N-linked (GlcNAc...) asparagine).

Belongs to the IL-15/IL-21 family.

It is found in the secreted. In terms of biological role, cytokine that plays a major role in the development of inflammatory and protective immune responses to microbial invaders and parasites by modulating immune cells of both the innate and adaptive immune systems. Stimulates the proliferation of natural killer cells, T-cells and B-cells and promotes the secretion of several cytokines. In monocytes, induces the production of IL8 and monocyte chemotactic protein 1/CCL2, two chemokines that attract neutrophils and monocytes respectively to sites of infection. Unlike most cytokines, which are secreted in soluble form, IL15 is expressed in association with its high affinity IL15RA on the surface of IL15-producing cells and delivers signals to target cells that express IL2RB and IL2RG receptor subunits. Binding to its receptor triggers the phosphorylation of JAK1 and JAK3 and the recruitment and subsequent phosphorylation of signal transducer and activator of transcription-3/STAT3 and STAT5. In mast cells, induces the rapid tyrosine phosphorylation of STAT6 and thereby controls mast cell survival and release of cytokines such as IL4. This chain is Interleukin-15 (IL15), found in Ailuropoda melanoleuca (Giant panda).